A 921-amino-acid polypeptide reads, in one-letter code: Bifunctional aspartokinase/homoserine dehydrogenase, chloroplastic (921 aa).

Residues 1-87 (SLSSAISPSS…DDSVEKVHLP (87 aa)) constitute a chloroplast transit peptide. The interval 88–339 (RGAMWSIHKF…VSEAVVLKTL (252 aa)) is aspartokinase. Positions 340–567 (SYQEAWEMSY…LSRTTIAVGI (228 aa)) are interface. ACT domains follow at residues 417–489 (VEGT…QVAN) and 498–575 (TVGQ…LIGA). A homoserine dehydrogenase region spans residues 568–921 (VGPGLIGATL…RLASYLGAPS (354 aa)). Residue Ile573 participates in NAD(+) binding. Positions 573, 605, 654, and 678 each coordinate NADP(+). NADPH is bound at residue Ile573. Thr654 provides a ligand contact to NAD(+). 2 residues coordinate NADPH: Thr654 and Lys678. Positions 705, 708, 710, and 712 each coordinate Na(+). NADP(+)-binding residues include Gly763 and Glu766. Glu766 and Asp777 together coordinate L-homoserine. Lys781 acts as the Proton donor in catalysis. Gly898 is an NAD(+) binding site. An NADP(+)-binding site is contributed by Gly898. Residue Gly898 coordinates NADPH.

In the N-terminal section; belongs to the aspartokinase family. The protein in the C-terminal section; belongs to the homoserine dehydrogenase family. A metal cation is required as a cofactor.

It localises to the plastid. Its subcellular location is the chloroplast. It carries out the reaction L-homoserine + NADP(+) = L-aspartate 4-semialdehyde + NADPH + H(+). The enzyme catalyses L-homoserine + NAD(+) = L-aspartate 4-semialdehyde + NADH + H(+). The catalysed reaction is L-aspartate + ATP = 4-phospho-L-aspartate + ADP. It functions in the pathway amino-acid biosynthesis; L-lysine biosynthesis via DAP pathway; (S)-tetrahydrodipicolinate from L-aspartate: step 1/4. It participates in amino-acid biosynthesis; L-methionine biosynthesis via de novo pathway; L-homoserine from L-aspartate: step 1/3. The protein operates within amino-acid biosynthesis; L-methionine biosynthesis via de novo pathway; L-homoserine from L-aspartate: step 3/3. Its pathway is amino-acid biosynthesis; L-threonine biosynthesis; L-threonine from L-aspartate: step 1/5. It functions in the pathway amino-acid biosynthesis; L-threonine biosynthesis; L-threonine from L-aspartate: step 3/5. Functionally, bifunctional aspartate kinase and homoserine dehydrogenase that catalyzes the first and the third steps toward the synthesis of lysine, methionine and threonine from aspartate. The sequence is that of Bifunctional aspartokinase/homoserine dehydrogenase, chloroplastic from Daucus carota (Wild carrot).